We begin with the raw amino-acid sequence, 229 residues long: MTKKKAFTPLLYLVSIVFLPWWLSLSFNKSLESWVNNWWNAGQSEIFLNDIQEKSILEKFIELEELLVLDELIEEYSETHLQKFRIGIQKEAIQLINIYNEGRIHTILHFSTNIICFVILSGFSILGNEELVILNSWTQKFLYNLSDTVKAFSILLLTDLCIGFHSPHGWELMVGSVYKDLGFVHNDQIISGLVSTFPVILDTIFKYWIFRYLNRVSPSLVVIYHSMND.

The next 4 helical transmembrane spans lie at F7–F27, I114–L134, I154–V174, and I189–I209.

It belongs to the CemA family.

The protein localises to the plastid. Its subcellular location is the chloroplast inner membrane. The enzyme catalyses K(+)(in) + H(+)(out) = K(+)(out) + H(+)(in). Its function is as follows. Contributes to K(+)/H(+) antiport activity by supporting proton efflux to control proton extrusion and homeostasis in chloroplasts in a light-dependent manner to modulate photosynthesis. Prevents excessive induction of non-photochemical quenching (NPQ) under continuous-light conditions. Indirectly promotes efficient inorganic carbon uptake into chloroplasts. The chain is Potassium/proton antiporter CemA from Coffea arabica (Arabian coffee).